The following is a 466-amino-acid chain: DNA polymerase delta subunit 3 (466 aa).

Ala-2 is modified (N-acetylalanine). Disordered stretches follow at residues 145–218 and 255–466; these read PAES…KEVM and EQEV…FQRK. Basic and acidic residues-rich tracts occupy residues 205 to 218, 255 to 265, and 281 to 297; these read DANK…KEVM, EQEVKEEKKVE, and DLKK…MQQK. Lys-259 participates in a covalent cross-link: Glycyl lysine isopeptide (Lys-Gly) (interchain with G-Cter in SUMO); alternate. Lys-259 is covalently cross-linked (Glycyl lysine isopeptide (Lys-Gly) (interchain with G-Cter in SUMO2); alternate). Lys-262 participates in a covalent cross-link: Glycyl lysine isopeptide (Lys-Gly) (interchain with G-Cter in SUMO2). Ser-308 is modified (phosphoserine). Residues 350–360 are compositionally biased toward pro residues; that stretch reads PSPPPPSPSPE. A phosphoserine mark is found at Ser-407 and Ser-409. Thr-411 carries the phosphothreonine modification. A Phosphoserine modification is found at Ser-413. The span at 432–441 shows a compositional bias: basic and acidic residues; the sequence is VKKEPKEERK. Lys-433 participates in a covalent cross-link: Glycyl lysine isopeptide (Lys-Gly) (interchain with G-Cter in SUMO); alternate. Lys-433 is covalently cross-linked (Glycyl lysine isopeptide (Lys-Gly) (interchain with G-Cter in SUMO2); alternate). Residues 456–463 carry the PIP-box motif; it reads QVAITGFF.

As to quaternary structure, component of both the DNA polymerase delta and DNA polymerase zeta complexes. The tetrameric DNA polymerase delta complex (Pol-delta4), which consists of POLD1/p125, POLD2/p50, POLD3/p66/p68 and POLD4/p12, with POLD1 bearing DNA polymerase and 3' to 5' proofreading exonuclease activities. Within this complex, directly interacts with POLD2. Following stress caused by DNA damaging agents or by replication stress, POLD4 is degraded and Pol-delta4 is converted into a trimeric form of the complex (Pol-delta3), which consists of POLD1, POLD2 and POLD3. Pol-delta3 is the major form occurring at S phase replication sites, as well as DNA damage sites. Directly interacts with PCNA, as do POLD1 and POLD4; this interaction stimulates Pol-delta polymerase activity. Component of the DNA polymerase zeta complex (POLZ), which consists of REV3L, MAD2L2, POLD2 and POLD3, with REV3L bearing DNA polymerase catalytic activity. The DNA polymerase delta complex interacts with POLDIP2; this interaction is probably mediated through direct binding to POLD2. Ubiquitinated, but not targeted to the proteasome. Sumoylated. Sumoylation by SUMO3 may be predominant.

The protein localises to the cytoplasm. Its subcellular location is the nucleus. In terms of biological role, accessory component of both the DNA polymerase delta complex and the DNA polymerase zeta complex. As a component of the trimeric and tetrameric DNA polymerase delta complexes (Pol-delta3 and Pol-delta4, respectively), plays a role in high fidelity genome replication, including in lagging strand synthesis, and repair. Required for optimal Pol-delta activity. Stabilizes the Pol-delta complex and plays a major role in Pol-delta stimulation by PCNA. Pol-delta3 and Pol-delta4 are characterized by the absence or the presence of POLD4. They exhibit differences in catalytic activity. Most notably, Pol-delta3 shows higher proofreading activity than Pol-delta4. Although both Pol-delta3 and Pol-delta4 process Okazaki fragments in vitro, Pol-delta3 may also be better suited to fulfill this task, exhibiting near-absence of strand displacement activity compared to Pol-delta4 and stalling on encounter with the 5'-blocking oligonucleotides. Pol-delta3 idling process may avoid the formation of a gap, while maintaining a nick that can be readily ligated. Along with DNA polymerase kappa, DNA polymerase delta carries out approximately half of nucleotide excision repair (NER) synthesis following UV irradiation. In this context, POLD3, along with PCNA and RFC1-replication factor C complex, is required to recruit POLD1, the catalytic subunit of the polymerase delta complex, to DNA damage sites. Under conditions of DNA replication stress, required for the repair of broken replication forks through break-induced replication (BIR). Involved in the translesion synthesis (TLS) of templates carrying O6-methylguanine or abasic sites performed by Pol-delta4, independently of DNA polymerase zeta (REV3L) or eta (POLH). Facilitates abasic site bypass by DNA polymerase delta by promoting extension from the nucleotide inserted opposite the lesion. Also involved in TLS, as a component of the tetrameric DNA polymerase zeta complex. Along with POLD2, dramatically increases the efficiency and processivity of DNA synthesis of the DNA polymerase zeta complex compared to the minimal zeta complex, consisting of only REV3L and REV7. This chain is DNA polymerase delta subunit 3 (POLD3), found in Bos taurus (Bovine).